Here is a 313-residue protein sequence, read N- to C-terminus: tRNA dimethylallyltransferase (313 aa).

ATP is bound at residue 11 to 18; it reads GPTAAGKS. Residue 13 to 18 coordinates substrate; sequence TAAGKS. Interaction with substrate tRNA stretches follow at residues 36–39, 160–164, and 244–249; these read DSAT, QRIQR, and RCVGYR.

Belongs to the IPP transferase family. As to quaternary structure, monomer. It depends on Mg(2+) as a cofactor.

It catalyses the reaction adenosine(37) in tRNA + dimethylallyl diphosphate = N(6)-dimethylallyladenosine(37) in tRNA + diphosphate. In terms of biological role, catalyzes the transfer of a dimethylallyl group onto the adenine at position 37 in tRNAs that read codons beginning with uridine, leading to the formation of N6-(dimethylallyl)adenosine (i(6)A). In Bordetella pertussis (strain Tohama I / ATCC BAA-589 / NCTC 13251), this protein is tRNA dimethylallyltransferase.